Consider the following 488-residue polypeptide: Altronate oxidoreductase (488 aa).

18 to 29 (VIQFGEGNFLRA) provides a ligand contact to NAD(+).

Belongs to the mannitol dehydrogenase family. UxaB subfamily.

The enzyme catalyses D-altronate + NAD(+) = keto-D-tagaturonate + NADH + H(+). Its pathway is carbohydrate metabolism; pentose and glucuronate interconversion. The protein is Altronate oxidoreductase of Pectobacterium atrosepticum (strain SCRI 1043 / ATCC BAA-672) (Erwinia carotovora subsp. atroseptica).